The chain runs to 491 residues: Cobyric acid synthase (491 aa).

In terms of domain architecture, GATase cobBQ-type spans 253 to 429 (AHRVAVVRLP…WHGSLEGDAL (177 aa)). Cysteine 334 functions as the Nucleophile in the catalytic mechanism. Histidine 421 is a catalytic residue.

This sequence belongs to the CobB/CobQ family. CobQ subfamily.

It participates in cofactor biosynthesis; adenosylcobalamin biosynthesis. In terms of biological role, catalyzes amidations at positions B, D, E, and G on adenosylcobyrinic A,C-diamide. NH(2) groups are provided by glutamine, and one molecule of ATP is hydrogenolyzed for each amidation. This chain is Cobyric acid synthase, found in Mycobacterium marinum (strain ATCC BAA-535 / M).